The sequence spans 152 residues: Nucleoside diphosphate kinase (152 aa).

Positions 11, 59, 87, 93, 104, and 114 each coordinate ATP. Histidine 117 functions as the Pros-phosphohistidine intermediate in the catalytic mechanism.

Belongs to the NDK family. As to quaternary structure, homotetramer. It depends on Mg(2+) as a cofactor.

Its subcellular location is the cytoplasm. The enzyme catalyses a 2'-deoxyribonucleoside 5'-diphosphate + ATP = a 2'-deoxyribonucleoside 5'-triphosphate + ADP. The catalysed reaction is a ribonucleoside 5'-diphosphate + ATP = a ribonucleoside 5'-triphosphate + ADP. Functionally, major role in the synthesis of nucleoside triphosphates other than ATP. The ATP gamma phosphate is transferred to the NDP beta phosphate via a ping-pong mechanism, using a phosphorylated active-site intermediate. The chain is Nucleoside diphosphate kinase from Prochlorococcus marinus (strain MIT 9301).